Consider the following 126-residue polypeptide: Protein ApaG (126 aa).

The ApaG domain maps to 2–126 (SDTQHQVNVR…FRLAVPGALH (125 aa)).

The sequence is that of Protein ApaG from Pseudomonas aeruginosa (strain LESB58).